A 114-amino-acid chain; its full sequence is T cell receptor beta variable 6-9 (114 aa).

A signal peptide spans 1–21 (MSIGLLCCVAFSLLWAGPVNA). The Ig-like domain occupies 22–114 (GVTQTPKFHI…TSVYFCASSY (93 aa)). Cys42 and Cys110 are oxidised to a cystine. Asn84 is a glycosylation site (N-linked (GlcNAc...) asparagine).

In terms of assembly, alpha-beta TR is a heterodimer composed of an alpha and beta chain; disulfide-linked. The alpha-beta TR is associated with the transmembrane signaling CD3 coreceptor proteins to form the TR-CD3 (TcR or TCR). The assembly of alpha-beta TR heterodimers with CD3 occurs in the endoplasmic reticulum where a single alpha-beta TR heterodimer associates with one CD3D-CD3E heterodimer, one CD3G-CD3E heterodimer and one CD247 homodimer forming a stable octameric structure. CD3D-CD3E and CD3G-CD3E heterodimers preferentially associate with TR alpha and TR beta chains, respectively. The association of the CD247 homodimer is the last step of TcR assembly in the endoplasmic reticulum and is required for transport to the cell surface.

It is found in the cell membrane. V region of the variable domain of T cell receptor (TR) beta chain that participates in the antigen recognition. Alpha-beta T cell receptors are antigen specific receptors which are essential to the immune response and are present on the cell surface of T lymphocytes. Recognize peptide-major histocompatibility (MH) (pMH) complexes that are displayed by antigen presenting cells (APC), a prerequisite for efficient T cell adaptive immunity against pathogens. Binding of alpha-beta TR to pMH complex initiates TR-CD3 clustering on the cell surface and intracellular activation of LCK that phosphorylates the ITAM motifs of CD3G, CD3D, CD3E and CD247 enabling the recruitment of ZAP70. In turn ZAP70 phosphorylates LAT, which recruits numerous signaling molecules to form the LAT signalosome. The LAT signalosome propagates signal branching to three major signaling pathways, the calcium, the mitogen-activated protein kinase (MAPK) kinase and the nuclear factor NF-kappa-B (NF-kB) pathways, leading to the mobilization of transcription factors that are critical for gene expression and essential for T cell growth and differentiation. The T cell repertoire is generated in the thymus, by V-(D)-J rearrangement. This repertoire is then shaped by intrathymic selection events to generate a peripheral T cell pool of self-MH restricted, non-autoaggressive T cells. Post-thymic interaction of alpha-beta TR with the pMH complexes shapes TR structural and functional avidity. This is T cell receptor beta variable 6-9 from Homo sapiens (Human).